Reading from the N-terminus, the 103-residue chain is Flagellar hook-basal body complex protein FliE (103 aa).

It belongs to the FliE family.

It localises to the bacterial flagellum basal body. This is Flagellar hook-basal body complex protein FliE from Cronobacter sakazakii (strain ATCC BAA-894) (Enterobacter sakazakii).